The primary structure comprises 367 residues: 3-dehydroquinate synthase (367 aa).

NAD(+)-binding positions include 69 to 74 (DGEAFK), 103 to 107 (GVIGD), 127 to 128 (TT), Lys-140, and Lys-149. Zn(2+) contacts are provided by Glu-182, His-245, and His-262.

The protein belongs to the sugar phosphate cyclases superfamily. Dehydroquinate synthase family. Co(2+) serves as cofactor. Zn(2+) is required as a cofactor. It depends on NAD(+) as a cofactor.

The protein resides in the cytoplasm. It catalyses the reaction 7-phospho-2-dehydro-3-deoxy-D-arabino-heptonate = 3-dehydroquinate + phosphate. The protein operates within metabolic intermediate biosynthesis; chorismate biosynthesis; chorismate from D-erythrose 4-phosphate and phosphoenolpyruvate: step 2/7. Catalyzes the conversion of 3-deoxy-D-arabino-heptulosonate 7-phosphate (DAHP) to dehydroquinate (DHQ). In Ectopseudomonas mendocina (strain ymp) (Pseudomonas mendocina), this protein is 3-dehydroquinate synthase.